Here is a 109-residue protein sequence, read N- to C-terminus: Parvalbumin beta (109 aa).

A2 carries the N-acetylalanine modification. EF-hand domains lie at K39–G74 and L78–G109. Ca(2+) is bound by residues D52, D54, S56, Y58, E60, E63, D91, D93, D95, K97, and E102.

It belongs to the parvalbumin family. The N-terminus is blocked.

Functionally, in muscle, parvalbumin is thought to be involved in relaxation after contraction. It binds two calcium ions. This chain is Parvalbumin beta, found in Scomber scombrus (Atlantic mackerel).